Here is a 155-residue protein sequence, read N- to C-terminus: S-ribosylhomocysteine lyase (155 aa).

Residues histidine 58, histidine 62, and cysteine 125 each contribute to the Fe cation site.

The protein belongs to the LuxS family. In terms of assembly, homodimer. Fe cation serves as cofactor.

It catalyses the reaction S-(5-deoxy-D-ribos-5-yl)-L-homocysteine = (S)-4,5-dihydroxypentane-2,3-dione + L-homocysteine. Functionally, involved in the synthesis of autoinducer 2 (AI-2) which is secreted by bacteria and is used to communicate both the cell density and the metabolic potential of the environment. The regulation of gene expression in response to changes in cell density is called quorum sensing. Catalyzes the transformation of S-ribosylhomocysteine (RHC) to homocysteine (HC) and 4,5-dihydroxy-2,3-pentadione (DPD). This is S-ribosylhomocysteine lyase from Helicobacter pylori (strain P12).